Consider the following 138-residue polypeptide: Ribosome-binding factor A (138 aa).

This sequence belongs to the RbfA family. Monomer. Binds 30S ribosomal subunits, but not 50S ribosomal subunits or 70S ribosomes.

The protein localises to the cytoplasm. Functionally, one of several proteins that assist in the late maturation steps of the functional core of the 30S ribosomal subunit. Associates with free 30S ribosomal subunits (but not with 30S subunits that are part of 70S ribosomes or polysomes). Required for efficient processing of 16S rRNA. May interact with the 5'-terminal helix region of 16S rRNA. The polypeptide is Ribosome-binding factor A (Pseudoalteromonas atlantica (strain T6c / ATCC BAA-1087)).